A 40-amino-acid chain; its full sequence is Snaclec LmrLEC-1 (40 aa).

Cys2 and Cys13 are oxidised to a cystine.

Belongs to the snaclec family. As to quaternary structure, dimer (non-covalently linked) of heterodimers of subunits alpha and beta (disulfide-linked). In terms of tissue distribution, expressed by the venom gland.

The protein resides in the secreted. Functionally, interferes with one step of hemostasis (modulation of platelet aggregation, or coagulation cascade, for example). This chain is Snaclec LmrLEC-1, found in Lachesis muta rhombeata (Bushmaster).